The primary structure comprises 363 residues: MTDNPADNKVFNEVSSLYKQYFDYAINVRKWLEIPDDLPHREIGYGMLKKVDNRNMSFNTNGEYLAWVLKESPFHLYKSLSYMEYPDVVGGAAKKGLIKREVAFDIDTHKTEKCTHDDSWICEECLGEARNQVLILIEDFLFPDFGLSEKDLKIVFTGNRGYHIYLKPEDTKKIGDTKLLEKIEKWEKNERRYFIEYILGKNLNLRNMGSRWKNILIREFKKNKISTKKFEKTSDWKTEIDTRKDNVRREIYETIGKVKSRLELDEKVMDDDIRLLRTIGSLHGYTGLMVKEITYSSLKSNQFDPLNHGVFSKFHKIMYNVNIKQEIDPLTLKGDTFDHKSTEIPASYLLFLFGHGIDFEILE.

Catalysis depends on residues aspartate 105, aspartate 107, and aspartate 265.

The protein belongs to the eukaryotic-type primase small subunit family. Heterodimer of a small subunit (PriS) and a large subunit (PriL). Requires Mg(2+) as cofactor. Mn(2+) is required as a cofactor.

Catalytic subunit of DNA primase, an RNA polymerase that catalyzes the synthesis of short RNA molecules used as primers for DNA polymerase during DNA replication. The small subunit contains the primase catalytic core and has DNA synthesis activity on its own. Binding to the large subunit stabilizes and modulates the activity, increasing the rate of DNA synthesis while decreasing the length of the DNA fragments, and conferring RNA synthesis capability. The DNA polymerase activity may enable DNA primase to also catalyze primer extension after primer synthesis. May also play a role in DNA repair. The polypeptide is DNA primase small subunit PriS (Methanococcus maripaludis (strain C7 / ATCC BAA-1331)).